We begin with the raw amino-acid sequence, 903 residues long: HTH-type transcriptional regulator MalT (903 aa).

39 to 46 (CPAGYGKT) serves as a coordination point for ATP. The HTH luxR-type domain occupies 832-897 (ELIRTSPLTQ…EAVQQAQRLL (66 aa)). Residues 856–875 (NDQIANELDVAATTIKTHIR) constitute a DNA-binding region (H-T-H motif).

Belongs to the MalT family. Monomer in solution. Oligomerizes to an active state in the presence of the positive effectors ATP and maltotriose.

With respect to regulation, activated by ATP and maltotriose, which are both required for DNA binding. In terms of biological role, positively regulates the transcription of the maltose regulon whose gene products are responsible for uptake and catabolism of malto-oligosaccharides. Specifically binds to the promoter region of its target genes, recognizing a short DNA motif called the MalT box. In Yersinia pseudotuberculosis serotype O:1b (strain IP 31758), this protein is HTH-type transcriptional regulator MalT.